The chain runs to 471 residues: MTELPDSTRWQLWIVAFGFFMQSLDTTIVNTALPSMALSLGESPLHMHMVVVSYVLTVAVMLPASGWLADKVGVRNIFFTAIVLFTLGSLFCAWSSTLNELVLARVLQGVGGAMMVPVGRLTVMKIVPREQYMAAMTFVTLPGQVGPLLGPALGGILVEYASWHWIFLINIPVGIVGAIATLMLMPNYTMQTRRFDLSGFLLLAVGMAVLTMALDGSKGTGLSPLSLGALVLCGILAIALYLKHAKNNPRALFSLALFRTHTFSLGLSGSFAGRVGSGMLPFMTPVFLQIGLGFSPFHAGLMMIPMVLGSMGMKRIVVQVVNRFGYRRVLVATTLGLSLVSLLFMSVAMLGWYYALPFVLFLQGMVNSTRFSSMNTLTLKDLPDELASSGNSLLSMIMQLSMSIGVTIAGLLLGMFGQQHIAADSGASHTVFMYTWLCMALIIALPALIFARVPNDTHKNAVISRRKRSTQ.

The next 13 membrane-spanning stretches (helical) occupy residues 12–32 (LWIVAFGFFMQSLDTTIVNTA), 49–69 (MVVVSYVLTVAVMLPASGWLA), 77–97 (IFFTAIVLFTLGSLFCAWSST), 102–124 (VLARVLQGVGGAMMVPVGRLTVM), 138–158 (FVTLPGQVGPLLGPALGGILV), 165–185 (WIFLINIPVGIVGAIATLMLM), 197–217 (LSGFLLLAVGMAVLTMALDGS), 222–242 (LSPLSLGALVLCGILAIALYL), 263–283 (FSLGLSGSFAGRVGSGMLPFM), 286–306 (VFLQIGLGFSPFHAGLMMIPM), 342–362 (LLFMSVAMLGWYYALPFVLFL), 396–416 (MIMQLSMSIGVTIAGLLLGMF), and 431–451 (VFMYTWLCMALIIALPALIFA).

The protein belongs to the major facilitator superfamily. TCR/Tet family.

The protein localises to the cell inner membrane. The chain is Putative multidrug resistance protein MdtD from Citrobacter koseri (strain ATCC BAA-895 / CDC 4225-83 / SGSC4696).